A 221-amino-acid polypeptide reads, in one-letter code: Glycerol metabolism activator (221 aa).

In terms of domain architecture, Response regulatory spans 3–120; it reads KILIADDHPL…QMTDAIEQIL (118 aa). Aspartate 55 is subject to 4-aspartylphosphate. Residues 149 to 214 enclose the HTH luxR-type domain; it reads APELLQALTR…QAILSAGDID (66 aa). A DNA-binding region (H-T-H motif) is located at residues 173–192; that stretch reads NKQIAYNLDIAETTVKAHVS.

Positive activator for glycerol metabolism. Regulates the expression of qedA in a positive manner and governs the expression of ADH I and ADH IIB. General regulator of quinoprotein ethanol oxidation and affects expression of ADH IIG activity but is not the sole regulator. The polypeptide is Glycerol metabolism activator (Pseudomonas putida (Arthrobacter siderocapsulatus)).